The chain runs to 99 residues: Large ribosomal subunit protein uL23 (99 aa).

Belongs to the universal ribosomal protein uL23 family. Part of the 50S ribosomal subunit. Contacts protein L29, and trigger factor when it is bound to the ribosome.

In terms of biological role, one of the early assembly proteins it binds 23S rRNA. One of the proteins that surrounds the polypeptide exit tunnel on the outside of the ribosome. Forms the main docking site for trigger factor binding to the ribosome. This chain is Large ribosomal subunit protein uL23, found in Pseudomonas entomophila (strain L48).